Here is a 530-residue protein sequence, read N- to C-terminus: Berberine bridge enzyme-like 4 (530 aa).

Residues 1 to 19 form the signal peptide; that stretch reads MKGTLSVLCLVLLVSVLEA. An intrachain disulfide couples C32 to C95. N-linked (GlcNAc...) asparagine glycosylation occurs at N52. In terms of domain architecture, FAD-binding PCMH-type spans 73–247; it reads NYRKLLAIVA…LSWKINLVDV (175 aa). Positions 110–172 form a cross-link, 6-(S-cysteinyl)-8alpha-(pros-histidyl)-FAD (His-Cys); that stretch reads HDYEGLSYMS…QTLAFPAGVC (63 aa). N257, N292, N341, and N441 each carry an N-linked (GlcNAc...) asparagine glycan.

The protein belongs to the oxygen-dependent FAD-linked oxidoreductase family. FAD serves as cofactor. In terms of processing, the FAD cofactor is bound via a bicovalent 6-S-cysteinyl, 8alpha-N1-histidyl FAD linkage.

It localises to the secreted. It is found in the cell wall. Functionally, probable flavin-dependent oxidoreductase. This chain is Berberine bridge enzyme-like 4, found in Arabidopsis thaliana (Mouse-ear cress).